A 347-amino-acid polypeptide reads, in one-letter code: UDP-3-O-acylglucosamine N-acyltransferase (347 aa).

Catalysis depends on His-241, which acts as the Proton acceptor.

This sequence belongs to the transferase hexapeptide repeat family. LpxD subfamily. As to quaternary structure, homotrimer.

The catalysed reaction is a UDP-3-O-[(3R)-3-hydroxyacyl]-alpha-D-glucosamine + a (3R)-hydroxyacyl-[ACP] = a UDP-2-N,3-O-bis[(3R)-3-hydroxyacyl]-alpha-D-glucosamine + holo-[ACP] + H(+). It functions in the pathway bacterial outer membrane biogenesis; LPS lipid A biosynthesis. Functionally, catalyzes the N-acylation of UDP-3-O-acylglucosamine using 3-hydroxyacyl-ACP as the acyl donor. Is involved in the biosynthesis of lipid A, a phosphorylated glycolipid that anchors the lipopolysaccharide to the outer membrane of the cell. This Neisseria gonorrhoeae (strain ATCC 700825 / FA 1090) protein is UDP-3-O-acylglucosamine N-acyltransferase.